A 692-amino-acid chain; its full sequence is MNRESKVFIESPILKEAILNTFKKLHPFLQAKNPVMFIVFLGALFTTWIFFKDLYYGVYSSFNLQISLWLWFTVLFANFAEAIAEGRGKARTDSLKKTRSNIIAKKLVGNKIENVPGTLLKIGDIVICEAGDLIPGDGEILEGIASVDESAITGESAPVVRESGGDRSAVTGGTKVLSDRIKISITAEQGRTFLDQMIALVEGAKRQKTPNEIALTMLLSGLSFIFLIAVMSLPLFAEFVAKEGGQSANLSIPILISLLVCLIPTTIAGLLSAIGISGMERLIRFNVISKSGRAIEAAGDIDILLLDKTGTITLGNREARDFYPAKGVDEKYLADVAQLSSLADETPEGRSIVILAKDKFGIRERNLSEMEGEFIPFSASTKMSGVNLKKEGKVVRKIRKGAGDSIRNYLHTLGQKISAELEETIQTISQRGSTPILITEEDRLLGVIELKDIVKGGLKERFASLRKMGIRTVMITGDNPLTAAAIAAEAGVDDFLAEATPETKLKKIREQQAKGYLVAMIGDGTNDAPALAQSDVGVAMNTGTQTAREAGNMIDLDSNPSKLIEIVEIGKQLLMTRGALTTFSIANDVAKYFAILPALFGSFYAVSEVGPLSALNLMKLGSQKSAVLSAVIFNALVIPALIPLALRGIVYKPLGADRILKRNLLIFGLGGMVIPFLGIKCIDLMLGFLGII.

4 helical membrane-spanning segments follow: residues valine 35–tyrosine 55, leucine 64–alanine 84, isoleucine 213–leucine 233, and isoleucine 254–isoleucine 274. Catalysis depends on aspartate 307, which acts as the 4-aspartylphosphate intermediate. ATP contacts are provided by residues aspartate 344, glutamate 348, phenylalanine 377 to serine 384, and lysine 400. Mg(2+)-binding residues include aspartate 523 and aspartate 527. Transmembrane regions (helical) follow at residues tyrosine 592–leucine 612, alanine 626–leucine 646, and methionine 672–isoleucine 692.

This sequence belongs to the cation transport ATPase (P-type) (TC 3.A.3) family. Type IA subfamily. In terms of assembly, the system is composed of three essential subunits: KdpA, KdpB and KdpC.

It is found in the cell inner membrane. The catalysed reaction is K(+)(out) + ATP + H2O = K(+)(in) + ADP + phosphate + H(+). Functionally, part of the high-affinity ATP-driven potassium transport (or Kdp) system, which catalyzes the hydrolysis of ATP coupled with the electrogenic transport of potassium into the cytoplasm. This subunit is responsible for energy coupling to the transport system and for the release of the potassium ions to the cytoplasm. In Leptospira interrogans serogroup Icterohaemorrhagiae serovar Lai (strain 56601), this protein is Potassium-transporting ATPase ATP-binding subunit.